The primary structure comprises 100 residues: Apolipoprotein C-II (100 aa).

The N-terminal stretch at 1–22 (MGSRFLLALFLVLLVLGCEVQA) is a signal peptide. Residues 66-74 (SVDEKLRDM) are lipid binding. The segment at 78-100 (SSAAMTTYASIFTDQIFTLLKGE) is lipoprotein lipase cofactor.

This sequence belongs to the apolipoprotein C2 family. In terms of processing, proapolipoprotein C-II is synthesized as a sialic acid containing glycoprotein which is subsequently desialylated prior to its proteolytic processing. Post-translationally, proapolipoprotein C-II, the major form found in plasma undergoes proteolytic cleavage of its N-terminal hexapeptide to generate the mature form apolipoprotein C-II, which occurs as the minor form in plasma.

It is found in the secreted. In terms of biological role, component of chylomicrons, very low-density lipoproteins (VLDL), low-density lipoproteins (LDL), and high-density lipoproteins (HDL) in plasma. Plays an important role in lipoprotein metabolism as an activator of lipoprotein lipase. In Bramus lutescens (Transcaucasian mole vole), this protein is Apolipoprotein C-II (APOC2).